The primary structure comprises 1019 residues: Antigenic heat-stable 120 kDa protein (1019 aa).

The segment at 1–33 (MSKNDNQDISEFDPLNREFTEAEKQQQMQQEQE) is disordered. A compositionally biased stretch (basic and acidic residues) spans 14–24 (PLNREFTEAEK).

Its subcellular location is the cytoplasm. This is Antigenic heat-stable 120 kDa protein (sca4) from Rickettsia typhi (strain ATCC VR-144 / Wilmington).